The sequence spans 225 residues: Histone H1.5 (225 aa).

Residues 1 to 23 form a disordered region; it reads MSDVAVAETPAVKTPTKASKATK. S2 carries the post-translational modification N-acetylserine. Positions 9 to 19 are enriched in low complexity; the sequence is TPAVKTPTKAS. In terms of domain architecture, H15 spans 37-113; that stretch reads AHPPFINMIT…GANGRFRLAV (77 aa). Basic and acidic residues predominate over residues 145–156; that stretch reads KKTVAKKTGDKV. The interval 145–225 is disordered; the sequence is KKTVAKKTGD…RKAVGTAPKA (81 aa). Basic residues predominate over residues 157–175; sequence KKVKSPKRIAKPAVKKVTK. Residues 176–208 are compositionally biased toward low complexity; sequence KAAAPTKSAANETAPKKAAATEAAPKKAAVTKA.

Belongs to the histone H1/H5 family.

Its subcellular location is the nucleus. The protein resides in the chromosome. Functionally, histones H1 are necessary for the condensation of nucleosome chains into higher-order structures. The chain is Histone H1.5 (hil-5) from Caenorhabditis elegans.